The primary structure comprises 146 residues: Hemoglobin subunit beta (146 aa).

The Globin domain occupies 2-146 (HWSAEEKQLI…VAHALARKYH (145 aa)). Histidine 63 and histidine 92 together coordinate heme b.

The protein belongs to the globin family. Heterotetramer of two alpha chains and two beta chains. Red blood cells.

Its function is as follows. Involved in oxygen transport from the lung to the various peripheral tissues. The protein is Hemoglobin subunit beta (HBB) of Aptenodytes forsteri (Emperor penguin).